Consider the following 1448-residue polypeptide: DNA primase TraC (1448 aa).

3 stretches are compositionally biased toward basic and acidic residues: residues 844–856, 863–872, and 882–898; these read ARVQEERVRRDPN, SAAKEARKTA, and DAQRRAAELERQERDRQ. Disordered stretches follow at residues 844–915 and 952–982; these read ARVQ…INVP and QGAATAAVEPRSAQPAPEAQGEAQKPAQQAQ. The span at 964-982 shows a compositional bias: low complexity; that stretch reads AQPAPEAQGEAQKPAQQAQ. The Toprim domain maps to 1237 to 1325; sequence PALVISEGYA…GKAIFPIFAP (89 aa). The interval 1414-1448 is disordered; that stretch reads ISQVQRDEQQHQEQKHVEKKQQQIEQRPRRAARIG. Residues 1418–1441 show a composition bias toward basic and acidic residues; that stretch reads QRDEQQHQEQKHVEKKQQQIEQRP.

In terms of biological role, required for autonomous replication in E.coli. Transferred into the recipient cell during bacterial conjugation. Catalyzes the synthesis of short oligoribonucleotide primers with CpA or pCpA at their 5'-termini on a single-stranded template DNA. The sequence is that of DNA primase TraC (traC) from Escherichia coli.